The following is a 571-amino-acid chain: Potassium-transporting ATPase potassium-binding subunit (571 aa).

11 consecutive transmembrane segments (helical) span residues 5-25 (GWTQ…PLGW), 64-84 (LGYA…LYAI), 136-156 (GLTH…VALI), 178-198 (ILYV…WQGI), 254-274 (LSNF…TNVF), 285-305 (WAIL…AYWA), 330-350 (FDIA…CGAV), 357-379 (FTAL…IGGV), 421-441 (MLGI…ATVL), 488-508 (LAVG…AIAG), and 527-547 (GALF…LTFF).

Belongs to the KdpA family. As to quaternary structure, the system is composed of three essential subunits: KdpA, KdpB and KdpC.

It is found in the cell inner membrane. Part of the high-affinity ATP-driven potassium transport (or Kdp) system, which catalyzes the hydrolysis of ATP coupled with the electrogenic transport of potassium into the cytoplasm. This subunit binds the periplasmic potassium ions and delivers the ions to the membrane domain of KdpB through an intramembrane tunnel. This is Potassium-transporting ATPase potassium-binding subunit from Methylobacterium nodulans (strain LMG 21967 / CNCM I-2342 / ORS 2060).